The following is a 72-amino-acid chain: Translation initiation factor IF-1 (72 aa).

An S1-like domain is found at 1–72 (MSKDDVIEMQ…TRGRITWRAK (72 aa)).

Belongs to the IF-1 family. In terms of assembly, component of the 30S ribosomal translation pre-initiation complex which assembles on the 30S ribosome in the order IF-2 and IF-3, IF-1 and N-formylmethionyl-tRNA(fMet); mRNA recruitment can occur at any time during PIC assembly.

The protein resides in the cytoplasm. Its function is as follows. One of the essential components for the initiation of protein synthesis. Stabilizes the binding of IF-2 and IF-3 on the 30S subunit to which N-formylmethionyl-tRNA(fMet) subsequently binds. Helps modulate mRNA selection, yielding the 30S pre-initiation complex (PIC). Upon addition of the 50S ribosomal subunit IF-1, IF-2 and IF-3 are released leaving the mature 70S translation initiation complex. The polypeptide is Translation initiation factor IF-1 (Clostridium botulinum (strain ATCC 19397 / Type A)).